The sequence spans 126 residues: Holo-[acyl-carrier-protein] synthase (126 aa).

Mg(2+) contacts are provided by Asp9 and Glu58.

It belongs to the P-Pant transferase superfamily. AcpS family. It depends on Mg(2+) as a cofactor.

The protein resides in the cytoplasm. It carries out the reaction apo-[ACP] + CoA = holo-[ACP] + adenosine 3',5'-bisphosphate + H(+). Transfers the 4'-phosphopantetheine moiety from coenzyme A to a Ser of acyl-carrier-protein. The chain is Holo-[acyl-carrier-protein] synthase from Vibrio campbellii (strain ATCC BAA-1116).